A 350-amino-acid chain; its full sequence is MSASPTAGQAGLSYRDAGVDIDAGDALVDRIKPFAKRTMREGVMAGIGGFGALFELSKKFQEPVLVSGTDGVGTKLKLAFQLNRHDTVGQDLVAMSVNDILVQGAEPLFFLDYFACGKLDVDTAATVIQGIARGCELAGCALIGGETAEMPSMYPDGEYDLAGFAVGAVEKKKIIDGSTITPGDVVLGLASSGAHSNGYSLVRKIIEVARPDLNADFHGQRLQDAIMAPTRIYVKPLLSLIETLPVKGMAHITGGGLTENVPRVLAQDVTAVLKRDAWTLPPLFQWLQAQGRVADDEMHRVFNCGIGMVVIVAKEDAERAIRHLQAAGEAVWQIGEIRERAEGEAQTIVV.

The protein belongs to the AIR synthase family.

It localises to the cytoplasm. The catalysed reaction is 2-formamido-N(1)-(5-O-phospho-beta-D-ribosyl)acetamidine + ATP = 5-amino-1-(5-phospho-beta-D-ribosyl)imidazole + ADP + phosphate + H(+). Its pathway is purine metabolism; IMP biosynthesis via de novo pathway; 5-amino-1-(5-phospho-D-ribosyl)imidazole from N(2)-formyl-N(1)-(5-phospho-D-ribosyl)glycinamide: step 2/2. This chain is Phosphoribosylformylglycinamidine cyclo-ligase, found in Cupriavidus necator (strain ATCC 17699 / DSM 428 / KCTC 22496 / NCIMB 10442 / H16 / Stanier 337) (Ralstonia eutropha).